The chain runs to 175 residues: Photosynthetic NDH subunit of subcomplex B 4, chloroplastic (175 aa).

The N-terminal 24 residues, 1-24, are a transit peptide targeting the chloroplast; sequence MAEAFTSFTFTNLHIPSSYNHSPK. Residues 95–111 traverse the membrane as a helical segment; it reads VYMFYIMFTCWGCLYFG.

Part of the chloroplast NDH complex, composed of a mixture of chloroplast and nucleus encoded subunits. Component of the NDH subcomplex B, at least composed of PnsB1, PnsB2, PnsB3, PnsB4 and PnsB5.

Its subcellular location is the plastid. The protein resides in the chloroplast thylakoid membrane. Its function is as follows. NDH shuttles electrons from NAD(P)H:plastoquinone, via FMN and iron-sulfur (Fe-S) centers, to quinones in the photosynthetic chain and possibly in a chloroplast respiratory chain. The immediate electron acceptor for the enzyme in this species is believed to be plastoquinone. Couples the redox reaction to proton translocation, and thus conserves the redox energy in a proton gradient. In Arabidopsis thaliana (Mouse-ear cress), this protein is Photosynthetic NDH subunit of subcomplex B 4, chloroplastic.